Here is a 731-residue protein sequence, read N- to C-terminus: Dynein axonemal intermediate chain 7 (731 aa).

Disordered stretches follow at residues 1–50 (MPPK…NERL) and 285–320 (QNTESSAAVHNGKMEGERDESESSKQVDECHSVRSE). Composition is skewed to basic and acidic residues over residues 17-50 (KAEKERLQREEEEKRQREAEEARLIAEREENERL) and 296-320 (GKMEGERDESESSKQVDECHSVRSE).

This sequence belongs to the DNAI7 family. In terms of assembly, part of the multisubunit axonemal dynein complex formed at least of two heavy chains and a number of intermediate and light chains.

It localises to the cell projection. It is found in the cilium. The protein localises to the cytoplasm. Its function is as follows. Via its association with the multisubunit axonemal dynein complex, may be potentially involved in the regulation of cilia function. This is Dynein axonemal intermediate chain 7 (dnai7) from Danio rerio (Zebrafish).